Here is a 634-residue protein sequence, read N- to C-terminus: Putative ABC transporter ATP-binding protein MG015 homolog (634 aa).

The next 6 helical transmembrane spans lie at 54–74 (VLYVMVCAIFGILTGVTNSIL), 111–131 (LTIVCVTVVVAYILIFSFNVA), 189–209 (VGGQTIQSLFILMTTATILFV), 213–233 (VIALISLTVLIALIALSFLFL), 296–316 (VFIYSWFGFISNITYLASISI), and 325–345 (IPSFGVSAINYSFMLSYIAAL). The ABC transmembrane type-1 domain occupies 54 to 364 (VLYVMVCAIF…IFSLWNLIQL (311 aa)). The 235-residue stretch at 397–631 (IRFEKVVFGY…NGFYARLKRS (235 aa)) folds into the ABC transporter domain. 430 to 437 (GPTGAGKS) contributes to the ATP binding site.

This sequence belongs to the ABC transporter superfamily.

It is found in the cell membrane. The sequence is that of Putative ABC transporter ATP-binding protein MG015 homolog from Mycoplasma pneumoniae (strain ATCC 29342 / M129 / Subtype 1) (Mycoplasmoides pneumoniae).